A 260-amino-acid chain; its full sequence is Exosome complex component Rrp42 (260 aa).

Belongs to the RNase PH family. Rrp42 subfamily. As to quaternary structure, component of the archaeal exosome complex. Forms a hexameric ring-like arrangement composed of 3 Rrp41-Rrp42 heterodimers. The hexameric ring associates with a trimer of Rrp4 and/or Csl4 subunits.

Its subcellular location is the cytoplasm. Functionally, non-catalytic component of the exosome, which is a complex involved in RNA degradation. Contributes to the structuring of the Rrp41 active site. In Methanocella arvoryzae (strain DSM 22066 / NBRC 105507 / MRE50), this protein is Exosome complex component Rrp42.